The primary structure comprises 454 residues: Bifunctional protein GlmU (454 aa).

A pyrophosphorylase region spans residues 1 to 231; that stretch reads MSRPTVSLIV…EAETLGVNTR (231 aa). Residues 11–14, Lys25, Gln78, 83–84, 106–108, Gly143, Glu157, Asn172, and Asn229 contribute to the UDP-N-acetyl-alpha-D-glucosamine site; these read LAAG, GT, and YGD. Residue Asp108 coordinates Mg(2+). Residue Asn229 coordinates Mg(2+). The interval 232 to 252 is linker; it reads AQLAAAEAEFQRRARAAALED. Residues 253–454 form an N-acetyltransferase region; the sequence is GVTLTAPDTV…ARDASKKGTN (202 aa). Residues Arg318 and Lys336 each contribute to the UDP-N-acetyl-alpha-D-glucosamine site. Residue His348 is the Proton acceptor of the active site. The UDP-N-acetyl-alpha-D-glucosamine site is built by Tyr351 and Asn362. Acetyl-CoA contacts are provided by residues Ala365, 371–372, Ser390, Ser408, and Arg425; that span reads NY.

The protein in the N-terminal section; belongs to the N-acetylglucosamine-1-phosphate uridyltransferase family. In the C-terminal section; belongs to the transferase hexapeptide repeat family. Homotrimer. It depends on Mg(2+) as a cofactor.

The protein resides in the cytoplasm. It carries out the reaction alpha-D-glucosamine 1-phosphate + acetyl-CoA = N-acetyl-alpha-D-glucosamine 1-phosphate + CoA + H(+). The catalysed reaction is N-acetyl-alpha-D-glucosamine 1-phosphate + UTP + H(+) = UDP-N-acetyl-alpha-D-glucosamine + diphosphate. The protein operates within nucleotide-sugar biosynthesis; UDP-N-acetyl-alpha-D-glucosamine biosynthesis; N-acetyl-alpha-D-glucosamine 1-phosphate from alpha-D-glucosamine 6-phosphate (route II): step 2/2. It participates in nucleotide-sugar biosynthesis; UDP-N-acetyl-alpha-D-glucosamine biosynthesis; UDP-N-acetyl-alpha-D-glucosamine from N-acetyl-alpha-D-glucosamine 1-phosphate: step 1/1. Its pathway is bacterial outer membrane biogenesis; LPS lipid A biosynthesis. In terms of biological role, catalyzes the last two sequential reactions in the de novo biosynthetic pathway for UDP-N-acetylglucosamine (UDP-GlcNAc). The C-terminal domain catalyzes the transfer of acetyl group from acetyl coenzyme A to glucosamine-1-phosphate (GlcN-1-P) to produce N-acetylglucosamine-1-phosphate (GlcNAc-1-P), which is converted into UDP-GlcNAc by the transfer of uridine 5-monophosphate (from uridine 5-triphosphate), a reaction catalyzed by the N-terminal domain. The polypeptide is Bifunctional protein GlmU (Cereibacter sphaeroides (strain ATCC 17025 / ATH 2.4.3) (Rhodobacter sphaeroides)).